Reading from the N-terminus, the 1037-residue chain is Tyrosine-protein kinase-like otk (1037 aa).

The N-terminal stretch at 1-22 (MAALRISVWILVQALMMALVSS) is a signal peptide. 2 N-linked (GlcNAc...) asparagine glycosylation sites follow: asparagine 23 and asparagine 39. Residues 23 to 582 (NSSHFLQLPQ…GGDGFLVTRA (560 aa)) are Extracellular-facing. Ig-like C2-type domains are found at residues 25-115 (SHFL…AKLS), 114-200 (LSVI…RVMS), 252-366 (PEDL…APIN), 369-464 (PGTL…VAIN), and 469-559 (PKFS…VQLV). 4 disulfide bridges follow: cysteine 46-cysteine 96, cysteine 138-cysteine 189, cysteine 277-cysteine 355, and cysteine 400-cysteine 448. Residues asparagine 337, asparagine 418, asparagine 430, asparagine 445, asparagine 458, asparagine 513, and asparagine 525 are each glycosylated (N-linked (GlcNAc...) asparagine). Cysteine 491 and cysteine 543 are disulfide-bonded. The chain crosses the membrane as a helical span at residues 583-603 (VLITMTVALAYIVLVVGLMLW). Topologically, residues 604–1037 (CRYRRQARKA…LSKAMQSLEK (434 aa)) are cytoplasmic. Disordered regions lie at residues 618-681 (LSTK…KKSA) and 719-764 (ATGS…KTSM). Polar residues predominate over residues 653-675 (QSRSKSNGDAQKSDDTACSQQSR). At serine 680 the chain carries Phosphoserine. In terms of domain architecture, Protein kinase; inactive spans 694-1035 (LTELIQIGRG…AALSKAMQSL (342 aa)). A compositionally biased stretch (basic and acidic residues) spans 724-735 (SDKDADTEKQHS).

This sequence belongs to the protein kinase superfamily. Tyr protein kinase family. Insulin receptor subfamily. As to quaternary structure, interacts with plexA; component of a receptor complex that mediates the repulsive signaling in response to Semaphorin ligands.

It is found in the cell membrane. Functionally, acts as a calcium-dependent, homophilic cell adhesion molecule that regulates neural recognition during the development of the nervous system. Component of the repulsive Plexin signaling response to regulate motor axon guidance at the embryonic stage. Also component of a receptor complex that is required in the adult visual system to innervate the lamina layer; specific targeting of R1-R6 axons. This Drosophila ananassae (Fruit fly) protein is Tyrosine-protein kinase-like otk.